The sequence spans 517 residues: T-box transcription factor TBX22 (517 aa).

The disordered stretch occupies residues methionine 1–leucine 83. The span at leucine 35–glutamate 45 shows a compositional bias: acidic residues. The span at glutamate 46–serine 66 shows a compositional bias: basic and acidic residues. Low complexity predominate over residues serine 74–leucine 83. A DNA-binding region (T-box) is located at residues leucine 93–aspartate 280. The segment at threonine 312–asparagine 333 is disordered. Low complexity predominate over residues serine 314–asparagine 333.

The protein localises to the nucleus. Its function is as follows. Probable transcriptional regulator involved in developmental processes. This is major determinant crucial to palatogenesis. The chain is T-box transcription factor TBX22 (Tbx22) from Mus musculus (Mouse).